The following is a 410-amino-acid chain: Diguanylate cyclase DgcM (410 aa).

PAS domains are found at residues 3 to 70 (THNF…NQHD) and 129 to 198 (GFYA…HLPG). Positions 199-251 (GHKPLNFVHKLADGSTRHVQTYAGPIEIYGDKLMLCIVHDITEQKRLEEQLEH) constitute a PAC domain. In terms of domain architecture, GGDEF spans 283-410 (QDYSLLLIDT…NDGRNRVLAA (128 aa)). A Mg(2+)-binding site is contributed by D291. Substrate contacts are provided by N299, H304, and D308. Mg(2+) is bound at residue E334. The active-site Proton acceptor is the E334.

In terms of assembly, forms homodimers and homotetramers. Interacts with PdeR and MlrA. The cofactor is Mg(2+).

It catalyses the reaction 2 GTP = 3',3'-c-di-GMP + 2 diphosphate. It functions in the pathway purine metabolism; 3',5'-cyclic di-GMP biosynthesis. Its activity is regulated as follows. Activity is inhibited by the phosphodiesterase PdeR. Inhibition is relieved by high cellular c-di-GMP levels. Functionally, part of a signaling cascade that regulates curli biosynthesis. The cascade is composed of two cyclic-di-GMP (c-di-GMP) control modules, in which c-di-GMP controlled by the DgcE/PdeH pair (module I) regulates the activity of the DgcM/PdeR pair (module II), which in turn regulates activity of the transcription factor MlrA and expression of the master biofilm regulator csgD. DgcM stimulates activity of MlrA by direct interaction, leading to the transcription of csgD. It also catalyzes the synthesis of c-di-GMP via the condensation of 2 GTP molecules, which contributes to the c-di-GMP pool generated by module I in a positive feedback loop. Production of c-di-GMP contributes to but is not essential for MlrA activation. The protein is Diguanylate cyclase DgcM of Escherichia coli (strain K12).